Reading from the N-terminus, the 404-residue chain is MLTLPDFPLPDARGRFGPYGGRYVPETLIPALEELEAAYREAKKDPAFLEELDHYLRQFAGRPTPLYHAKRLSEYWGGAQVFLKREDLLHTGAHKINNTLGQALLARRMGKRRVIAETGAGQHGVSVATVAALFGLECVVYMGEEDVRRQALNVFRMKLLGAEVRPVAAGSRTLKDATNEAIRDWITNVRTTFYILGSVVGPHPYPMMVRDFQSVIGEEVKRQSLELFGRLPDALIAAVGGGSNAIGLFAPFAYLPEGRPKLIGVEAAGEGLSTGRHAASIGAGKRGVLHGSYMYLLYDHDGQITPAHSVSAGLDYPGVGPEHSYYADAGVAEYASVTDEEALEGFKLLARLEGIIPALESAHAIAYAAKVVPEMDKDQVVVINLSGRGDKDVTEVMRLLGGEL.

Lys-95 carries the N6-(pyridoxal phosphate)lysine modification.

The protein belongs to the TrpB family. In terms of assembly, tetramer of two alpha and two beta chains. Requires pyridoxal 5'-phosphate as cofactor.

The catalysed reaction is (1S,2R)-1-C-(indol-3-yl)glycerol 3-phosphate + L-serine = D-glyceraldehyde 3-phosphate + L-tryptophan + H2O. The protein operates within amino-acid biosynthesis; L-tryptophan biosynthesis; L-tryptophan from chorismate: step 5/5. Its function is as follows. The beta subunit is responsible for the synthesis of L-tryptophan from indole and L-serine. The protein is Tryptophan synthase beta chain (trpB) of Thermus thermophilus (strain ATCC BAA-163 / DSM 7039 / HB27).